The chain runs to 890 residues: Translation initiation factor IF-2 (890 aa).

The disordered stretch occupies residues leucine 45–glutamine 304. Residues serine 67–valine 81 show a composition bias toward polar residues. Over residues valine 92–aspartate 217 the composition is skewed to basic and acidic residues. The span at glycine 252–asparagine 266 shows a compositional bias: basic residues. The span at lysine 267–alanine 280 shows a compositional bias: basic and acidic residues. Residues proline 389–lysine 558 form the tr-type G domain. Positions glycine 398 to threonine 405 are G1. Glycine 398–threonine 405 lines the GTP pocket. Positions glycine 423–histidine 427 are G2. The tract at residues aspartate 444–glycine 447 is G3. GTP contacts are provided by residues aspartate 444–histidine 448 and asparagine 498–aspartate 501. The G4 stretch occupies residues asparagine 498–aspartate 501. A G5 region spans residues serine 534–lysine 536. An N6-acetyllysine modification is found at lysine 808.

It belongs to the TRAFAC class translation factor GTPase superfamily. Classic translation factor GTPase family. IF-2 subfamily.

The protein localises to the cytoplasm. Its function is as follows. One of the essential components for the initiation of protein synthesis. Protects formylmethionyl-tRNA from spontaneous hydrolysis and promotes its binding to the 30S ribosomal subunits. Also involved in the hydrolysis of GTP during the formation of the 70S ribosomal complex. This Escherichia coli O127:H6 (strain E2348/69 / EPEC) protein is Translation initiation factor IF-2.